We begin with the raw amino-acid sequence, 177 residues long: Putative acetyltransferase FG08082 (177 aa).

One can recognise an N-acetyltransferase domain in the interval 81-174; that stretch reads EEWEQVGLVR…VSIAMVEGPG (94 aa).

It belongs to the acetyltransferase family.

Its pathway is mycotoxin biosynthesis. In terms of biological role, putative acetyltransferase; part of the gene cluster that mediates the biosynthesis of butenolide, a mycotoxin that shows antibiotic activity but does not seem to play a major role in the spread of head blight in wheat. Butenolide is derived from glutamic acid via a 4-acetamido-2-butenoic acid intermediate. The predicted function of the NADH:flavin oxidoreductase FG08077, the cytochrome P450 monooxygenase FG08079, the decarboxylase FG08083, and the putative acetyltransferase FG08082 are consistent with this pathway, however, the respective activities of the butelonide biosynthesis cluster enzymes have still to be experimentally determined. In Gibberella zeae (strain ATCC MYA-4620 / CBS 123657 / FGSC 9075 / NRRL 31084 / PH-1) (Wheat head blight fungus), this protein is Putative acetyltransferase FG08082.